A 948-amino-acid chain; its full sequence is Valine--tRNA ligase (948 aa).

The 'HIGH' region motif lies at 40–50 (PNVTGSLHMGH). A 'KMSKS' region motif is present at residues 551 to 555 (KMSKS). Residue K554 coordinates ATP. Residues 879-945 (LIDKGAELAR…GKLAEQHARI (67 aa)) are a coiled coil.

It belongs to the class-I aminoacyl-tRNA synthetase family. ValS type 1 subfamily. In terms of assembly, monomer.

The protein resides in the cytoplasm. It catalyses the reaction tRNA(Val) + L-valine + ATP = L-valyl-tRNA(Val) + AMP + diphosphate. Catalyzes the attachment of valine to tRNA(Val). As ValRS can inadvertently accommodate and process structurally similar amino acids such as threonine, to avoid such errors, it has a 'posttransfer' editing activity that hydrolyzes mischarged Thr-tRNA(Val) in a tRNA-dependent manner. This chain is Valine--tRNA ligase, found in Pseudomonas syringae pv. tomato (strain ATCC BAA-871 / DC3000).